A 157-amino-acid chain; its full sequence is Transcription elongation factor GreA (157 aa).

Positions 1–75 form a coiled coil; sequence MSKEIILTQE…VETLINRAKV (75 aa).

The protein belongs to the GreA/GreB family.

Its function is as follows. Necessary for efficient RNA polymerase transcription elongation past template-encoded arresting sites. The arresting sites in DNA have the property of trapping a certain fraction of elongating RNA polymerases that pass through, resulting in locked ternary complexes. Cleavage of the nascent transcript by cleavage factors such as GreA or GreB allows the resumption of elongation from the new 3'terminus. GreA releases sequences of 2 to 3 nucleotides. The protein is Transcription elongation factor GreA of Mycoplasma mycoides subsp. mycoides SC (strain CCUG 32753 / NCTC 10114 / PG1).